The sequence spans 342 residues: Foldase protein PrsA (342 aa).

The N-terminal stretch at 1 to 22 (MVSVKKIVASALVGVLMFSAVG) is a signal peptide. A lipid anchor (N-palmitoyl cysteine) is attached at C23. Residue C23 is the site of S-diacylglycerol cysteine attachment. In terms of domain architecture, PpiC spans 189-284 (DSGVLTKHLL…FGYHIIQAGA (96 aa)).

This sequence belongs to the PrsA family.

It localises to the cell membrane. The catalysed reaction is [protein]-peptidylproline (omega=180) = [protein]-peptidylproline (omega=0). Its function is as follows. Plays a major role in protein secretion by helping the post-translocational extracellular folding of several secreted proteins. In Clostridium perfringens (strain 13 / Type A), this protein is Foldase protein PrsA.